Here is a 515-residue protein sequence, read N- to C-terminus: NADH-ubiquinone oxidoreductase chain 2 (515 aa).

The next 5 helical transmembrane spans lie at 63–83 (WPIG…NSGS), 250–270 (VFIY…CSIA), 299–319 (FVLV…GLFI), 356–376 (AITF…AGFC), and 379–399 (FYLF…VGVV).

Belongs to the complex I subunit 2 family.

It is found in the mitochondrion inner membrane. It catalyses the reaction a ubiquinone + NADH + 5 H(+)(in) = a ubiquinol + NAD(+) + 4 H(+)(out). Core subunit of the mitochondrial membrane respiratory chain NADH dehydrogenase (Complex I) that is believed to belong to the minimal assembly required for catalysis. Complex I functions in the transfer of electrons from NADH to the respiratory chain. The immediate electron acceptor for the enzyme is believed to be ubiquinone. This Beta vulgaris (Sugar beet) protein is NADH-ubiquinone oxidoreductase chain 2 (ND2).